The chain runs to 156 residues: uncharacterized protein (156 aa).

3 consecutive transmembrane segments (helical) span residues 21 to 41 (GVLFSSFALLFMFFNSLAISL), 54 to 74 (TICSSLIPCRTLIFSLWIDFA), and 80 to 100 (SVLVCCFSASLPLVFFFWALF).

The protein resides in the membrane. This is an uncharacterized protein from Saccharomyces cerevisiae (strain ATCC 204508 / S288c) (Baker's yeast).